The following is a 464-amino-acid chain: ESX-1 secretion system protein EccE1 (464 aa).

The next 2 helical transmembrane spans lie at 11–31 (FTTGHGIWAATLIPACIAICM) and 34–54 (DLLWLGITLGALIALFSVLTI).

It belongs to the EccE family. In terms of assembly, part of the ESX-1 / type VII secretion system (T7SS), which is composed of cytosolic and membrane components. The ESX-1 membrane complex is composed of EccB1, EccCa1, EccCb1, EccD1 and EccE1.

It is found in the cell inner membrane. Its function is as follows. Part of the ESX-1 / type VII specialized secretion system (T7SS), which exports several proteins including EsxA and EsxB. Plays a role in DNA conjugation, in at least a donor strain. In Mycolicibacterium smegmatis (strain ATCC 700084 / mc(2)155) (Mycobacterium smegmatis), this protein is ESX-1 secretion system protein EccE1.